A 309-amino-acid polypeptide reads, in one-letter code: Protease HtpX homolog (309 aa).

A run of 2 helical transmembrane segments spans residues 7 to 27 (AILL…IGGA) and 28 to 48 (SGAM…YWNS). His130 lines the Zn(2+) pocket. Residue Glu131 is part of the active site. Residue His134 coordinates Zn(2+). Helical transmembrane passes span 145-165 (VTAT…FFGG) and 173-193 (GLGV…AMLV). Residue Glu202 participates in Zn(2+) binding.

This sequence belongs to the peptidase M48B family. The cofactor is Zn(2+).

The protein resides in the cell inner membrane. The polypeptide is Protease HtpX homolog (Rhodopseudomonas palustris (strain BisA53)).